Reading from the N-terminus, the 448-residue chain is B-cell lymphoma 3 protein homolog (448 aa).

The disordered stretch occupies residues methionine 1–alanine 54. Residue serine 39 is modified to Phosphoserine. 7 ANK repeats span residues aspartate 129–aspartate 161, leucine 166–alanine 195, histidine 199–valine 228, glutamate 236–alanine 265, serine 270–alanine 299, serine 303–leucine 332, and lysine 333–serine 362. A disordered region spans residues lysine 356–serine 448. Over residues alanine 361–asparagine 376 the composition is skewed to polar residues. Phosphoserine is present on serine 369. The segment covering serine 377–serine 398 has biased composition (low complexity). A phosphoserine; by GSK3 mark is found at serine 396 and serine 400. Residues threonine 411–proline 423 are compositionally biased toward polar residues. Residues phenylalanine 425–glycine 436 are compositionally biased toward low complexity. Residues arginine 437 to serine 448 show a composition bias toward pro residues.

As to quaternary structure, component of a complex consisting of the NF-kappa-B p52-p52 homodimer and BCL3. Component of a complex consisting of the NF-kappa-B p50-p50 homodimer and BCL3. Interacts with N4BP2, COPS5 and PIR. Interacts with CYLD. In terms of processing, polyubiquitinated. Ubiquitination via 'Lys-63'-linked ubiquitin chains is required for nuclear accumulation. Deubiquitinated by CYLD, which acts on 'Lys-63'-linked ubiquitin chains. Deubiquitination by CYLD prevents nuclear accumulation. Post-translationally, activated by phosphorylation.

It is found in the nucleus. The protein resides in the cytoplasm. Its subcellular location is the perinuclear region. Contributes to the regulation of transcriptional activation of NF-kappa-B target genes. In the cytoplasm, inhibits the nuclear translocation of the NF-kappa-B p50 subunit. In the nucleus, acts as a transcriptional activator that promotes transcription of NF-kappa-B target genes. Contributes to the regulation of cell proliferation. The chain is B-cell lymphoma 3 protein homolog (Bcl3) from Mus musculus (Mouse).